The following is a 630-amino-acid chain: Neuronal acetylcholine receptor subunit alpha-4 (630 aa).

Residues Met-1–Ser-30 form the signal peptide. Residues Ile-32–Thr-249 lie on the Extracellular side of the membrane. A glycan (N-linked (GlcNAc...) asparagine) is linked at Asn-59. The Ca(2+) site is built by Val-78 and Glu-80. Residues Asn-109 and Asn-176 are each glycosylated (N-linked (GlcNAc...) asparagine). 2 disulfide bridges follow: Cys-163–Cys-177 and Cys-227–Cys-228. Residues Ile-250 to Pro-270 traverse the membrane as a helical segment. Cys-273 carries S-palmitoyl cysteine lipidation. The next 2 membrane-spanning stretches (helical) occupy residues Leu-279–Pro-299 and Leu-313–Val-333. Residues His-334 to Arg-604 lie on the Cytoplasmic side of the membrane. Disordered stretches follow at residues Thr-418 to Pro-463 and Ser-505 to Pro-526. Residue Ser-428 is modified to Phosphoserine. Residues Pro-434 to Lys-443 show a composition bias toward basic and acidic residues. The segment covering Cys-447–Lys-457 has biased composition (pro residues). Phosphoserine is present on residues Ser-542 and Ser-545. A helical membrane pass occupies residues Ile-605–Pro-625.

Belongs to the ligand-gated ion channel (TC 1.A.9) family. Acetylcholine receptor (TC 1.A.9.1) subfamily. Alpha-4/CHRNA4 sub-subfamily. Neuronal AChR is composed of two different types of subunits: alpha and beta. CHRNA4 forms heteropentameric neuronal acetylcholine receptors with CHRNB2 and CHRNB4, as well as CHRNA5 and CHRNB3 as accesory subunits. Found in two major stoichiometric forms, LS (low agonist sensitivity): (CHRNA4)3:(CHRNB2)2 and HS (high agonist sensitivity): (CHRNA4)2:(CHRNB2)3, the two stoichiometric forms differ in their unitary conductance, calcium permeability, ACh sensitivity and potentiation by divalent cation. Cells produce predominantly an (CHRNA4)3:(CHRNB2)2 nAChR. The (CHRNA4)2:(CHRNB2)3 expression is selectively up-regulated by nicotine and has lower single channel conductance and calcium permeability. In the striatum, also forms CHRNA4:CHRNA6:CHRNB2 complexes. Also found in the stoichiometric form: (CHRNA4:CHRNB2)2:CHRNB3. Interacts with RIC3; which is required for proper folding and assembly. Interacts with LYPD6. In various regions of the central nervous system. Expressed in hippocampal neurons.

Its subcellular location is the presynaptic cell membrane. It is found in the cell membrane. The catalysed reaction is Ca(2+)(in) = Ca(2+)(out). The enzyme catalyses K(+)(in) = K(+)(out). It catalyses the reaction Na(+)(in) = Na(+)(out). Activated by a myriad of ligands such as acetylcholine, cytisine, nicotine, choline and epibatidine. Channel potentiation by calcium is stoichiometry-selective, CHRNA4:CHRNB2 nACh receptor is achieved by calcium association with topographically distinct sites framed by anionic residues within the CHRNA4 subunit and between the CHRNA4 and CHRNB2 subunits. nAChR activity is inhibited by the antagonist alpha-conotoxins BuIA, PnIA, GID and MII, small disulfide-constrained peptides from cone snails. Component of neuronal acetylcholine receptors (nAChRs) that function as pentameric, ligand-gated cation channels with high calcium permeability among other activities. nAChRs are excitatory neurotrasnmitter receptors formed by a collection of nAChR subunits known to mediate synaptic transmission in the nervous system and the neuromuscular junction. Each nAchR subunit confers differential attributes to channel properties, including activation, deactivation and desensitization kinetics, pH sensitivity, cation permeability, and binding to allosteric modulators. CHRNA4 forms heteropentameric neuronal acetylcholine receptors with CHRNB2 and CHRNB4, as well as CHRNA5 and CHRNB3 as accesory subunits. Is the most abundant nAChR subtype expressed in the central nervous system. Found in two major stoichiometric forms,(CHRNA4)3:(CHRNB2)2 and (CHRNA4)2:(CHRNB2)3, the two stoichiometric forms differ in their unitary conductance, calcium permeability, ACh sensitivity and potentiation by divalent cation. Involved in the modulation of calcium-dependent signaling pathways, influences the release of neurotransmitters, including dopamine, glutamate and GABA. The sequence is that of Neuronal acetylcholine receptor subunit alpha-4 (Chrna4) from Rattus norvegicus (Rat).